The primary structure comprises 366 residues: MGSTGSETQMTPTQVSDEEANLFAMQLASASVLPMVLKAAIELDLLEIMAKAGPGAFLSPGEVAAQLPTQNPEAPVMLDRIFRLLASYSVLTCTLRNLPDGKVERLYGLAPVCKFLVKNEDGVSIAALNLMNQDKILMESWYYLKDAVLEGGIPFNKAYGMTAFEYHGTDPRFNKIFNRGMSDHSTITMKKILETYKGFEGLETVVDVGGGTGAVLSMIVAKYPSMKGINFDLPHVIEDAPPLPGVKHVGGDMFVSVPKGDAIFMKWICHDWSDDHCAKFLKNCYDALPNIGKVIVAECVLPVYPDTSLATKNVIHIDCIMLAHNPGGKERTQKEFETLAKGAGFQGFQVMCCAFGTHVMEFLKTA.

131 to 137 contributes to the substrate binding site; sequence MNQDKIL. The substrate binding stretch occupies residues 163–181; the sequence is AFEYHGTDPRFNKIFNRGM. S-adenosyl-L-methionine contacts are provided by Gly-209, Asp-232, Asp-252, Met-253, and Lys-266. Residue His-270 is the Proton acceptor of the active site.

The protein belongs to the class I-like SAM-binding methyltransferase superfamily. Cation-independent O-methyltransferase family. COMT subfamily. In terms of assembly, homodimer.

It catalyses the reaction (E)-caffeate + S-adenosyl-L-methionine = (E)-ferulate + S-adenosyl-L-homocysteine + H(+). It functions in the pathway aromatic compound metabolism; phenylpropanoid biosynthesis. Functionally, catalyzes the conversion of caffeic acid to ferulic acid and of 5-hydroxyferulic acid to sinapic acid. The resulting products may subsequently be converted to the corresponding alcohols that are incorporated into lignins. The sequence is that of Caffeic acid 3-O-methyltransferase (OMT) from Eucalyptus gunnii (Cider gum).